Consider the following 1548-residue polypeptide: MGDPAAHEMADLERGFSSEDDAEYRSGDDEASKFVENEPSKRGKISQKKKIEQTNFAKWMDTNQKSLTRKAVKQSVNQDNSLAYMIRSWEGGEKIITSPRDYQMELFERAKQQNTIAVLDTGSGKTLIAALLLDHTVNQELEDRAKGLPRRIAFFLVEKVALAFQQHAVLECNLAHSVAVFSGESIKNTWTKGFWETQLADHEVIVCTAEILNQCLQYAYIRIDQINLLVFDEAHHTKKNHPYARIIKDYYASGKDRGLRLPRIFGMTASPVDALIDVRQAAIELEGLLHSRIATTADPDALRRAVGRPKKEIIYKYNPLVKPIQTMLTFKLRPLIANNKQFSKAFAFSEAAARELGTWFVDRMWQLFLEDEELLKLEAKTERSLSKDMAAPEVVEKHRNAVRSARELIRSHEFPKPEPGLLSSKLKTLSKLLEEYFTDSSIRCIVFVERRWTAKLLTDFFESHAAEIPGLKVGSLMGANAEGGSSQTSFREQIRTILSFKKGNTNCIFATSVAEEGLDIPDCNLIIRFDICKTMIQYIQSRGRARQADSTYIHLIEGGNGDHRRIMHQNAENEKLLRRFCNTQPEDRLLKGSDYDMDFFLRQERNQRQYTIKSTGARLTYKNSLPILQAFLNTLRNQDDYAEGMDLVADYSILSVQGGFICEVMMPPLSPVTSAIGKVYSTKQVAKCSAAFELCFQLIQKKFLDDHLRSKFVEKRHVMANARLAVSSKNKAKYDMRLKPQIWAELGVPEKLYATVLILSKPSALERPSRPLFILTRTPLPQLKPFLLFLGPVEQEMTSDLVCQVLNCPITPTEEDLQLLTKFTLKIFVDIFNKKYAANAQALPYFFAPTNKDHVFLFSNLQDPRNAVDWPLLRHVADRDAEAYTGDEPEEFFQDKYIVDPHDGARRFWLQGIRKDLTCTSPVPADVEHQPTHRQWKRREVPHDILHWSLTAWKATREAHENKWKENQPVVVGKYATLRRNFLADINETSKNPFCYFVLEPMRISPLPVDVVAMAYLLPSIIHRIEQNLIALDACRLLQLDIHPDLALEALTKDSDNQGEDERMDSIQAFEPVNFQPGMGANYERLELLGDSFLKMATTIAVFTLIPNKDEFDYHCERMVMICNQNLFGVAKSDDLKLHEYIRSKSFERGTWYPVLKLEFGKTHLKTLKQMDEHRLADKSIADVCEALIGAAYMTTRKHDDYDLAVRAVTRLVNHKQHPMTKWDDYHAAYVMPGWQTMPANAAELDMAQKIHEATGYQFKHPRVLRSAFRHPSRPYVFDKVPHYQRLEFLGDALFDMACVDYLFHIAPDEGPQWLTEHKMAMVSNQFLGCLAVSLGFHKFILHHHASIGSQIHEYVTEITEARRAAEDAAEAAGKPRSAYSRDYWVEAPQPPKCIPDVLEAYVGAIFVDSKYDYSVVQQFFHAHVLPFFASMRMYDTFANKHPVTFFTQYVFETFGCHAYGLHAEEMPVKDDTGLVTGKTQVVAGILLHGQVVEGAVRDSGRYAKIAAARKALDKLRSMTRQEFLDAYKCDCKPGEAAEDISESATAI.

Positions 1–41 are enriched in basic and acidic residues; the sequence is MGDPAAHEMADLERGFSSEDDAEYRSGDDEASKFVENEPSK. The disordered stretch occupies residues 1-48; that stretch reads MGDPAAHEMADLERGFSSEDDAEYRSGDDEASKFVENEPSKRGKISQK. The Helicase ATP-binding domain occupies 106–289; it reads LFERAKQQNT…QAAIELEGLL (184 aa). 119–126 lines the ATP pocket; it reads LDTGSGKT. A DEAH box motif is present at residues 232-235; it reads DEAH. Positions 428-589 constitute a Helicase C-terminal domain; that stretch reads TLSKLLEEYF…FCNTQPEDRL (162 aa). The Dicer dsRNA-binding fold domain maps to 624-718; the sequence is SLPILQAFLN…RSKFVEKRHV (95 aa). A PAZ domain is found at 871–1006; that stretch reads PLLRHVADRD…FVLEPMRISP (136 aa). 2 RNase III domains span residues 1051–1197 and 1248–1411; these read LTKD…MTTR and AQKI…VDSK. Mg(2+)-binding residues include E1288, D1397, and E1400. The 74-residue stretch at 1445-1518 folds into the DRBM domain; that stretch reads TFFTQYVFET…ARKALDKLRS (74 aa). 4 residues coordinate Zn(2+): C1457, H1489, C1530, and C1532.

Belongs to the helicase family. Dicer subfamily. The cofactor is Mg(2+). It depends on Mn(2+) as a cofactor.

In terms of biological role, dicer-like endonuclease involved in cleaving double-stranded RNA in the RNA interference (RNAi) pathway. Produces 21 to 25 bp dsRNAs (siRNAs) which target the selective destruction of homologous RNAs leading to sequence-specific suppression of gene expression, called post-transcriptional gene silencing (PTGS). Part of a broad host defense response against viral infection and transposons. The polypeptide is Dicer-like protein 1 (DCL-1) (Cryphonectria parasitica (Chestnut blight fungus)).